A 226-amino-acid chain; its full sequence is Leucyl/phenylalanyl-tRNA--protein transferase (226 aa).

It belongs to the L/F-transferase family.

It is found in the cytoplasm. The catalysed reaction is N-terminal L-lysyl-[protein] + L-leucyl-tRNA(Leu) = N-terminal L-leucyl-L-lysyl-[protein] + tRNA(Leu) + H(+). The enzyme catalyses N-terminal L-arginyl-[protein] + L-leucyl-tRNA(Leu) = N-terminal L-leucyl-L-arginyl-[protein] + tRNA(Leu) + H(+). It carries out the reaction L-phenylalanyl-tRNA(Phe) + an N-terminal L-alpha-aminoacyl-[protein] = an N-terminal L-phenylalanyl-L-alpha-aminoacyl-[protein] + tRNA(Phe). Its function is as follows. Functions in the N-end rule pathway of protein degradation where it conjugates Leu, Phe and, less efficiently, Met from aminoacyl-tRNAs to the N-termini of proteins containing an N-terminal arginine or lysine. The protein is Leucyl/phenylalanyl-tRNA--protein transferase of Bradyrhizobium sp. (strain ORS 278).